We begin with the raw amino-acid sequence, 579 residues long: Extracellular serine/threonine protein kinase FAM20C (579 aa).

The Cytoplasmic portion of the chain corresponds to 1 to 10 (MKMILVRRFR). Residues 1 to 87 (MKMILVRRFR…PNKHTLRILQ (87 aa)) constitute a propeptide that is removed on maturation. Residues 11–31 (VLILVVFLLACALHIAVDLLP) traverse the membrane as a helical; Signal-anchor for type II membrane protein segment. Residues 32–579 (KLDRRATRSS…ATEHRASTER (548 aa)) are Lumenal-facing. The disordered stretch occupies residues 38–79 (TRSSGEPGCSCAQPAAEAAGPGWAQARSRPGESAGGDAGWPN). A compositionally biased stretch (low complexity) spans 49–63 (AQPAAEAAGPGWAQA). A glycan (N-linked (GlcNAc...) asparagine) is linked at asparagine 96. The tract at residues 104 to 155 (KLPSAAEPVDHAPRGQEPRSPPPRDPAHRPLLRDPGPRPRVPPPGPSGDGSL) is disordered. 2 stretches are compositionally biased toward basic and acidic residues: residues 111-120 (PVDHAPRGQE) and 128-140 (DPAH…DPGP). 3 residues coordinate ATP: glutamine 264, lysine 280, and glutamate 301. Position 301 (glutamate 301) interacts with Mn(2+). Residues 349–560 (FVSPANNICF…AVRDCVEKDG (212 aa)) are kinase domain. 2 disulfide bridges follow: cysteine 357/cysteine 373 and cysteine 362/cysteine 366. Position 384–387 (384–387 (AAFL)) interacts with ATP. Intrachain disulfides connect cysteine 421–cysteine 495 and cysteine 496–cysteine 555. Residue aspartate 453 is part of the active site. ATP contacts are provided by glutamate 458 and aspartate 473. Position 473 (aspartate 473) interacts with Mn(2+).

Belongs to the FAM20 family. In terms of assembly, homodimer; disulfide-linked. Interacts with FAM20A; probably forming a heterotetramer of 2 subunits of FAM20A and 2 subunits of FAM20C. Interacts with COPII components SEC23A and SEC24A; transport of FAM20C from the endoplasmic reticulum to the Golgi is likely to be mediated by COPII vesicles. Mn(2+) serves as cofactor. Post-translationally, N-glycosylation is required for folding. In terms of processing, autophosphorylated. Propeptide cleavage by MBTPS1/S1P promotes FAM20C secretion and maximal kinase activity which is essential for efficient osteoblast differentiation and biomineralization. In terms of tissue distribution, in the mammary gland, expressed at higher levels in lactating mice than in virgin mice (at protein level). Highly expressed in the tooth. No expression in the dental pulp. At the secretory stage of amelogenesis, it is detected in the matrix of the enamel, in the ameloblasts, and within the cells adjoining the stratum intermedium (a tissue layer analogous to the stellate reticulum seen in the developing molar). Strong expression is observed in maturation stage ameloblasts and throughout the non-cornified layers of the gingival epithelium. Expressed at moderate levels in bone and at low levels in kidney, liver, brain and lung. Very low expression, if any, in spleen and skeletal muscle.

It localises to the golgi apparatus membrane. The protein resides in the secreted. It is found in the endoplasmic reticulum. The catalysed reaction is L-seryl-[protein] + ATP = O-phospho-L-seryl-[protein] + ADP + H(+). It catalyses the reaction L-threonyl-[protein] + ATP = O-phospho-L-threonyl-[protein] + ADP + H(+). Serine/threonine protein kinase activity is increased upon interaction with FAM20A. In terms of biological role, golgi serine/threonine protein kinase that phosphorylates secretory pathway proteins within Ser-x-Glu/pSer motifs and plays a key role in biomineralization of bones and teeth. Constitutes the main protein kinase for extracellular proteins, generating the majority of the extracellular phosphoproteome. Mainly phosphorylates proteins within the Ser-x-Glu/pSer motif, but also displays a broader substrate specificity. Phosphorylates ERO1A, enhancing its activity which is required to maintain endoplasmic reticulum redox homeostasis and for oxidative protein folding. During endoplasmic reticulum stress, phosphorylates P4HB/PDIA1 which induces a functional switch, causing P4HB to change from an oxidoreductase to a molecular chaperone. This is critical to maintain ER proteostasis and reduce cell death under ER stress. Phosphorylation of P4HB also promotes its interaction with ERN1, leading to reduced activity of ERN1, a key sensor for the endoplasmic reticulum unfolded protein response. Required for osteoblast differentiation and mineralization. Phosphorylates casein as well as a number of proteins involved in biomineralization such as AMELX, AMTN, ENAM and SPP1. In addition to its role in biomineralization, also plays a role in lipid homeostasis, wound healing and cell migration and adhesion. In Mus musculus (Mouse), this protein is Extracellular serine/threonine protein kinase FAM20C.